A 202-amino-acid chain; its full sequence is Arenicin-2 (202 aa).

The signal sequence occupies residues 1 to 25; that stretch reads MTSTQSVAVYATLILAIFCFNDIHC. Residues 26–181 constitute a propeptide that is removed on maturation; it reads DPIAEARAAA…SGDNNEPEKR (156 aa). The region spanning 73 to 168 is the BRICHOS domain; that stretch reads GDGVEGSVMV…ACQGKSVYWL (96 aa). 2 disulfide bridges follow: Cys-100–Cys-160 and Cys-184–Cys-201.

Has antimicrobial activity against the Gram-negative bacteria E.coli and P.mirabilis, the Gram-positive bacterium L.monocytogenes and the yeast C.albicans. In Arenicola marina (Lugworm), this protein is Arenicin-2.